The following is a 629-amino-acid chain: tRNA uridine 5-carboxymethylaminomethyl modification enzyme MnmG (629 aa).

FAD is bound at residue 13 to 18 (GGGHAG). 273–287 (GPRYCPSIEDKIHRF) is a binding site for NAD(+).

This sequence belongs to the MnmG family. In terms of assembly, homodimer. Heterotetramer of two MnmE and two MnmG subunits. FAD serves as cofactor.

It localises to the cytoplasm. In terms of biological role, NAD-binding protein involved in the addition of a carboxymethylaminomethyl (cmnm) group at the wobble position (U34) of certain tRNAs, forming tRNA-cmnm(5)s(2)U34. In Shewanella baltica (strain OS185), this protein is tRNA uridine 5-carboxymethylaminomethyl modification enzyme MnmG.